The primary structure comprises 603 residues: Serine palmitoyltransferase 2 (603 aa).

The helical transmembrane segment at 90-107 (YYYVVATYLTYLVLIIIG) threads the bilayer. Lysine 398 is subject to N6-(pyridoxal phosphate)lysine.

It belongs to the class-II pyridoxal-phosphate-dependent aminotransferase family. Lcb1 and lcb2 encode essential subunits of the enzyme and form a heterodimer. The cofactor is pyridoxal 5'-phosphate.

Its subcellular location is the cytoplasm. The protein resides in the endoplasmic reticulum. The protein localises to the membrane. The enzyme catalyses L-serine + hexadecanoyl-CoA + H(+) = 3-oxosphinganine + CO2 + CoA. It participates in lipid metabolism; sphingolipid metabolism. Functionally, catalytic subunit of serine palmitoyltransferase (SPT), which catalyzes the committed step in the synthesis of sphingolipids, the condensation of serine with palmitoyl CoA to form the long chain base 3-ketosphinganine. In Schizosaccharomyces pombe (strain 972 / ATCC 24843) (Fission yeast), this protein is Serine palmitoyltransferase 2 (lcb2).